The sequence spans 595 residues: Transketolase-like protein 1 (595 aa).

Residue 93-95 (GWP) coordinates thiamine diphosphate. Mg(2+) contacts are provided by Asp-125, Asn-155, and Ile-157. A thiamine diphosphate-binding site is contributed by Asn-155. Residues Lys-217, Glu-339, and Phe-365 each coordinate thiamine diphosphate. Glu-339 (proton donor) is an active-site residue. Residues His-389 and Asp-397 each contribute to the substrate site. Thiamine diphosphate is bound at residue His-401.

This sequence belongs to the transketolase family. Homodimer. Mg(2+) is required as a cofactor. Ca(2+) serves as cofactor. Requires Mn(2+) as cofactor. It depends on Co(2+) as a cofactor. The cofactor is thiamine diphosphate. As to expression, not expressed in the embryonic neocortex.

It localises to the cytoplasm. The catalysed reaction is D-sedoheptulose 7-phosphate + D-glyceraldehyde 3-phosphate = aldehydo-D-ribose 5-phosphate + D-xylulose 5-phosphate. In terms of biological role, catalyzes the transfer of a two-carbon ketol group from a ketose donor to an aldose acceptor, via a covalent intermediate with the cofactor thiamine pyrophosphate. The polypeptide is Transketolase-like protein 1 (Mus musculus (Mouse)).